The primary structure comprises 156 residues: U4/U6.U5 small nuclear ribonucleoprotein 27 kDa protein (156 aa).

The disordered stretch occupies residues 1–98; sequence MGRSRSRSPE…IAAEDLEGKT (98 aa). The segment covering 13 to 59 has biased composition (basic residues); that stretch reads RERRRSRSASRERERRRRERSRSRERRRSRSRSPHRRRSRSPRRHRS. Residues 66–98 show a composition bias toward basic and acidic residues; the sequence is RLKDRRDDDKKDSKESKGAKERQIAAEDLEGKT.

It belongs to the SNUT3 family. In terms of assembly, part of a tri-snRNP complex.

Its subcellular location is the nucleus. May play a role in mRNA splicing. In Xenopus tropicalis (Western clawed frog), this protein is U4/U6.U5 small nuclear ribonucleoprotein 27 kDa protein (snrnp27).